Consider the following 219-residue polypeptide: UPF0502 protein Swoo_2055 (219 aa).

The disordered stretch occupies residues 167–195 (QVKGESVPISEHSRSQREAPSKRQDEMDE). The segment covering 177–191 (EHSRSQREAPSKRQD) has biased composition (basic and acidic residues).

It belongs to the UPF0502 family.

This chain is UPF0502 protein Swoo_2055, found in Shewanella woodyi (strain ATCC 51908 / MS32).